Here is a 201-residue protein sequence, read N- to C-terminus: Glutathione S-transferase GstA (201 aa).

The GST N-terminal domain maps to 1-81; it reads MKLFYKPGAC…YLADSVPDRQ (81 aa). Residues cysteine 10, lysine 35, valine 52, 65–66, asparagine 99, and 103–106 contribute to the glutathione site; these read EG and TELH. The region spanning 87–201 is the GST C-terminal domain; the sequence is NSISRYKTIE…QDALSAEGLK (115 aa).

Belongs to the GST superfamily. Beta family. Homodimer.

It is found in the cytoplasm. The enzyme catalyses RX + glutathione = an S-substituted glutathione + a halide anion + H(+). Functionally, conjugation of reduced glutathione to a wide number of exogenous and endogenous hydrophobic electrophiles. The sequence is that of Glutathione S-transferase GstA (gstA) from Escherichia coli O157:H7.